The primary structure comprises 523 residues: NADP-specific glutamate dehydrogenase (523 aa).

A disordered region spans residues 26–50 (CARGRSAKRDVAAKRLRSRSPRMDA). Residue K202 is part of the active site.

The protein belongs to the Glu/Leu/Phe/Val dehydrogenases family. In terms of assembly, homo- and heterohexamer of alpha and beta subunits. Both subunits are encoded by the same gene. Post-translationally, the N-termini of the alpha and the beta chains are blocked.

The protein resides in the plastid. Its subcellular location is the chloroplast. The enzyme catalyses L-glutamate + NADP(+) + H2O = 2-oxoglutarate + NH4(+) + NADPH + H(+). The sequence is that of NADP-specific glutamate dehydrogenase from Chlorella sorokiniana (Freshwater green alga).